Here is a 398-residue protein sequence, read N- to C-terminus: tRNA-specific 2-thiouridylase MnmA (398 aa).

ATP-binding positions include 18-25 (AMSGGVDS) and leucine 44. The active-site Nucleophile is the cysteine 112. A disulfide bond links cysteine 112 and cysteine 213. ATP is bound at residue glycine 136. The interval 163–165 (RDQ) is interaction with tRNA. The active-site Cysteine persulfide intermediate is the cysteine 213.

It belongs to the MnmA/TRMU family.

Its subcellular location is the cytoplasm. The enzyme catalyses S-sulfanyl-L-cysteinyl-[protein] + uridine(34) in tRNA + AH2 + ATP = 2-thiouridine(34) in tRNA + L-cysteinyl-[protein] + A + AMP + diphosphate + H(+). Catalyzes the 2-thiolation of uridine at the wobble position (U34) of tRNA, leading to the formation of s(2)U34. The protein is tRNA-specific 2-thiouridylase MnmA of Rhizobium meliloti (strain 1021) (Ensifer meliloti).